Here is a 159-residue protein sequence, read N- to C-terminus: Ribosomal RNA large subunit methyltransferase H (159 aa).

S-adenosyl-L-methionine contacts are provided by residues Leu76, Gly108, and 127 to 132; that span reads FGRLTY.

It belongs to the RNA methyltransferase RlmH family. As to quaternary structure, homodimer.

The protein localises to the cytoplasm. The enzyme catalyses pseudouridine(1915) in 23S rRNA + S-adenosyl-L-methionine = N(3)-methylpseudouridine(1915) in 23S rRNA + S-adenosyl-L-homocysteine + H(+). Specifically methylates the pseudouridine at position 1915 (m3Psi1915) in 23S rRNA. The polypeptide is Ribosomal RNA large subunit methyltransferase H (Enterococcus faecalis (strain ATCC 700802 / V583)).